The sequence spans 471 residues: Cytolysin (471 aa).

Positions 1–20 are cleaved as a signal peptide; the sequence is MKKMTLFTLSLLATAVQVGA. In terms of domain architecture, Ricin B-type lectin spans 338-465; sequence AHVTLQSLSN…EANQARWKPT (128 aa).

This sequence belongs to the HlyA hemolysin family.

Functionally, bacterial hemolysins are exotoxins that attack blood cell membranes and cause cell rupture by mechanisms not clearly defined. The polypeptide is Cytolysin (vvhA) (Vibrio vulnificus (strain CMCP6)).